The primary structure comprises 400 residues: Na(+)/H(+) antiporter NhaA (400 aa).

The next 12 helical transmembrane spans lie at 26 to 46, 71 to 91, 107 to 127, 137 to 157, 166 to 186, 189 to 209, 212 to 232, 233 to 253, 273 to 293, 299 to 319, 340 to 360, and 373 to 393; these read AGGI…NSPL, LIHW…GMEV, IFPA…YWFI, GWAI…ALLS, IFLL…IALF, HGLS…LILL, FKVS…ASVL, KSGV…PLKG, FVIL…GIDV, PLLL…IFGF, IFAV…LASL, and LSRL…YLFL.

It belongs to the NhaA Na(+)/H(+) (TC 2.A.33) antiporter family.

Its subcellular location is the cell inner membrane. The catalysed reaction is Na(+)(in) + 2 H(+)(out) = Na(+)(out) + 2 H(+)(in). In terms of biological role, na(+)/H(+) antiporter that extrudes sodium in exchange for external protons. The protein is Na(+)/H(+) antiporter NhaA of Haemophilus influenzae (strain PittGG).